The following is a 228-amino-acid chain: MIITIDGPVATGKSTIAKKLAESIGFIFFDTGAMYRALTFGILKNQIDLSDPDTLQNYLDHFQFDIKVIHHDRHYFVDKEDVSKLIRGKEVTSSVSKVSAIKAVREKLMAIQRELAEGVNAVFEGRDMGTVVFPNANIKIFLTGRNDVRAKRRYDELTSKFPEETKELTLEKCLEEITKRDNYDSTREYSPLCQAEDAFVIDTSDLSIDEVVYKILEYKDTIKTKRPS.

Residue 7 to 15 participates in ATP binding; the sequence is GPVATGKST.

The protein belongs to the cytidylate kinase family. Type 1 subfamily.

Its subcellular location is the cytoplasm. It carries out the reaction CMP + ATP = CDP + ADP. The catalysed reaction is dCMP + ATP = dCDP + ADP. This is Cytidylate kinase from Protochlamydia amoebophila (strain UWE25).